The chain runs to 281 residues: MNIVNTIKDVKLIIKKWKDENLSIGYVPTMGYLHEGHASLIKKAREENDKVIVSIFVNPIQFGPKEDYSIYPRDLVKDSSLCEKFEVDLIFNPETSEMYPNKIYSHVNVDILTQNLCGEKRPGHFQGVCTVLTKFFNILNPTKAYFGEKDAQQLAVVKKMVEDLNFPIEIIGCPIIREEDGLAKSSRNAYLNKQERKSALILNKSLKEALNALESGEKNSNNIRDIIVSKLNKEPLAKIDYVSIVDSITLQSVEKIQSSILVAIAVYIGKTRLIDNFTFKL.

Position 30–37 (30–37) interacts with ATP; that stretch reads MGYLHEGH. The active-site Proton donor is His37. Residue Gln61 coordinates (R)-pantoate. Residue Gln61 coordinates beta-alanine. 147-150 contacts ATP; the sequence is GEKD. (R)-pantoate is bound at residue Gln153. Residues Ile176 and 184–187 contribute to the ATP site; that span reads KSSR.

The protein belongs to the pantothenate synthetase family. Homodimer.

The protein localises to the cytoplasm. The enzyme catalyses (R)-pantoate + beta-alanine + ATP = (R)-pantothenate + AMP + diphosphate + H(+). Its pathway is cofactor biosynthesis; (R)-pantothenate biosynthesis; (R)-pantothenate from (R)-pantoate and beta-alanine: step 1/1. Catalyzes the condensation of pantoate with beta-alanine in an ATP-dependent reaction via a pantoyl-adenylate intermediate. This chain is Pantothenate synthetase, found in Clostridium botulinum (strain 657 / Type Ba4).